The chain runs to 360 residues: Hydroxyproline O-arabinosyltransferase RDN2 (360 aa).

A helical; Signal-anchor transmembrane segment spans residues 13-33; it reads VLGSSFATYNLVTMIIHYGSA.

The protein localises to the golgi apparatus membrane. The enzyme catalyses trans-4-hydroxy-L-prolyl-[protein] + UDP-beta-L-arabinofuranose = O-(beta-L-arabinofuranosyl)-trans-4-hydroxy-L-prolyl-[protein] + UDP + H(+). Its function is as follows. Glycosyltransferase involved in the O-arabinosylation of several proteins including extensins and small signaling peptides. Catalyzes the transfer of the initial L-arabinose to the hydroxyl group of Hyp residues. Probably involved in the arabinosylation of CLAVATA3/ESR-related (CLE) signaling peptides that move from root to shoot, to interact with SUNN receptor kinase signaling that regulates nodulation. Involved in long distance nodulation signaling events. Involved in the autoregulation of nodulation (AON), a long distance systemic signaling from root to shoot and back again, which allows legumes to limit the number of root nodules formed based on available nitrogen and previous rhizobial colonization. Functions in the root, upstream of the shoot receptor kinase SUNN and via CLE peptide, to control AON. The polypeptide is Hydroxyproline O-arabinosyltransferase RDN2 (Medicago truncatula (Barrel medic)).